A 231-amino-acid chain; its full sequence is 2-C-methyl-D-erythritol 4-phosphate cytidylyltransferase (231 aa).

It belongs to the IspD/TarI cytidylyltransferase family. IspD subfamily.

It carries out the reaction 2-C-methyl-D-erythritol 4-phosphate + CTP + H(+) = 4-CDP-2-C-methyl-D-erythritol + diphosphate. The protein operates within isoprenoid biosynthesis; isopentenyl diphosphate biosynthesis via DXP pathway; isopentenyl diphosphate from 1-deoxy-D-xylulose 5-phosphate: step 2/6. In terms of biological role, catalyzes the formation of 4-diphosphocytidyl-2-C-methyl-D-erythritol from CTP and 2-C-methyl-D-erythritol 4-phosphate (MEP). The chain is 2-C-methyl-D-erythritol 4-phosphate cytidylyltransferase from Clostridium kluyveri (strain NBRC 12016).